The sequence spans 410 residues: DNA replication and repair protein RecF (410 aa).

30 to 37 (GPNGHGKT) is a binding site for ATP.

The protein belongs to the RecF family.

It localises to the cytoplasm. In terms of biological role, the RecF protein is involved in DNA metabolism; it is required for DNA replication and normal SOS inducibility. RecF binds preferentially to single-stranded, linear DNA. It also seems to bind ATP. The chain is DNA replication and repair protein RecF from Rhodococcus jostii (strain RHA1).